The chain runs to 918 residues: UPF0182 protein CPF_0011 (918 aa).

7 helical membrane-spanning segments follow: residues 8–28 (TVLI…NFII), 46–66 (LIAI…VIAI), 91–111 (FLLS…TTQW), 151–171 (AISL…ALGF), 200–220 (LAVL…LKSY), 243–263 (IFYK…FISI), and 271–291 (IIIS…VAIF). Over residues 857 to 869 (EENKNSNKDETPK) the composition is skewed to basic and acidic residues. Positions 857 to 876 (EENKNSNKDETPKNEITSDN) are disordered.

Belongs to the UPF0182 family.

The protein resides in the cell membrane. This chain is UPF0182 protein CPF_0011, found in Clostridium perfringens (strain ATCC 13124 / DSM 756 / JCM 1290 / NCIMB 6125 / NCTC 8237 / Type A).